A 212-amino-acid polypeptide reads, in one-letter code: Thymidylate kinase (212 aa).

An ATP-binding site is contributed by 10–17; sequence GIDGCGKT.

The protein belongs to the thymidylate kinase family.

It catalyses the reaction dTMP + ATP = dTDP + ADP. Its function is as follows. Phosphorylation of dTMP to form dTDP in both de novo and salvage pathways of dTTP synthesis. This chain is Thymidylate kinase, found in Prochlorococcus marinus (strain MIT 9312).